The sequence spans 293 residues: 4-hydroxybenzoate octaprenyltransferase (293 aa).

A run of 8 helical transmembrane segments spans residues 41–61 (FAAA…LGVI), 98–118 (TEAK…DLLL), 122–142 (TFLL…MKRF), 145–165 (LPQV…YGAV), 167–187 (ESLP…TVAY), 218–238 (IIAL…WISQ), 241–261 (WGYF…CWLT), and 272–292 (AFLN…VGIY).

The protein belongs to the UbiA prenyltransferase family. Mg(2+) serves as cofactor.

It localises to the cell inner membrane. The catalysed reaction is all-trans-octaprenyl diphosphate + 4-hydroxybenzoate = 4-hydroxy-3-(all-trans-octaprenyl)benzoate + diphosphate. It functions in the pathway cofactor biosynthesis; ubiquinone biosynthesis. Functionally, catalyzes the prenylation of para-hydroxybenzoate (PHB) with an all-trans polyprenyl group. Mediates the second step in the final reaction sequence of ubiquinone-8 (UQ-8) biosynthesis, which is the condensation of the polyisoprenoid side chain with PHB, generating the first membrane-bound Q intermediate 3-octaprenyl-4-hydroxybenzoate. The protein is 4-hydroxybenzoate octaprenyltransferase of Actinobacillus pleuropneumoniae serotype 5b (strain L20).